The chain runs to 167 residues: Transcription factor 24 (167 aa).

Positions 1 to 23 (MDRGRPAGSPLSASAEPAPLAAA) are enriched in low complexity. The tract at residues 1-60 (MDRGRPAGSPLSASAEPAPLAAAIRDSRPGRTGPGPAGPGGGSRSGSGRPAAANAARERS) is disordered. The span at 32 to 45 (TGPGPAGPGGGSRS) shows a compositional bias: gly residues. The segment covering 46–55 (GSGRPAAANA) has biased composition (low complexity). The bHLH domain occupies 49–101 (RPAAANAARERSRVQTLRHAFLELQRTLPSVPPDTKLSKLDVLLLATTYIAHL).

As to quaternary structure, efficient DNA binding requires dimerization with another bHLH protein.

It is found in the nucleus. Putative transcription factor. This is Transcription factor 24 (TCF24) from Homo sapiens (Human).